An 86-amino-acid chain; its full sequence is UPF0297 protein LCABL_08470 (86 aa).

It belongs to the UPF0297 family.

This chain is UPF0297 protein LCABL_08470, found in Lacticaseibacillus casei (strain BL23) (Lactobacillus casei).